Here is a 272-residue protein sequence, read N- to C-terminus: MNRIDKTLEKLKANRKKMLSPYITAGDPYPELTVSLMHQLVKSGADVLELGIPFSDPMAEGPVIQRAMERALAHSIHCDDVLNMVRQFRKTDTETPVILMGYLNPIEQYGYDLFAQQAVEAGADGTILVDLPPEEADGVSRVWQKHGLYSIYLCSPTTSAERMNFINQHANGYLYYVSLKGVTGSDALKLPELKAQYLQRKAQSKLPLMVGFGIKTPEMAAQVAEFADGVIVGAALINEIIEAYEAKKDPLQASGALLSSMRQAIDNIGSMV.

Catalysis depends on proton acceptor residues Glu49 and Glu60.

It belongs to the TrpA family. As to quaternary structure, tetramer of two alpha and two beta chains.

It carries out the reaction (1S,2R)-1-C-(indol-3-yl)glycerol 3-phosphate + L-serine = D-glyceraldehyde 3-phosphate + L-tryptophan + H2O. It functions in the pathway amino-acid biosynthesis; L-tryptophan biosynthesis; L-tryptophan from chorismate: step 5/5. Functionally, the alpha subunit is responsible for the aldol cleavage of indoleglycerol phosphate to indole and glyceraldehyde 3-phosphate. This is Tryptophan synthase alpha chain from Legionella pneumophila (strain Paris).